The primary structure comprises 572 residues: [Pyruvate dehydrogenase [acetyl-transferring]]-phosphatase 1, mitochondrial (572 aa).

The segment at N95–Q122 is disordered. The region spanning R153–F543 is the PPM-type phosphatase domain. Residues D197, G198, D424, and D480 each contribute to the Mn(2+) site. The segment covering E470 to D480 has biased composition (basic and acidic residues). Residues E470 to E492 form a disordered region. Residues N481 to P491 show a composition bias toward low complexity.

The protein belongs to the PP2C family. Mg(2+) serves as cofactor. It depends on Mn(2+) as a cofactor. In terms of processing, processed by mitochondrial inner membrane protease (IMP) complex and released to the intermembrane space.

The protein resides in the mitochondrion intermembrane space. The catalysed reaction is O-phospho-L-seryl-[pyruvate dehydrogenase E1 alpha subunit] + H2O = L-seryl-[pyruvate dehydrogenase E1 alpha subunit] + phosphate. Its function is as follows. Catalyzes the dephosphorylation and concomitant reactivation of the E1 alpha subunit (PDA1) of the pyruvate dehydrogenase complex. This is [Pyruvate dehydrogenase [acetyl-transferring]]-phosphatase 1, mitochondrial (PTC5) from Saccharomyces cerevisiae (strain ATCC 204508 / S288c) (Baker's yeast).